The following is a 2703-amino-acid chain: Serine/arginine repetitive matrix protein 2 (2703 aa).

M1 is modified (N-acetylmethionine). The stretch at 60–92 (HERKRRVELRCLELEEMMEEQGYEEQQIQEKVA) forms a coiled coil. N6-acetyllysine is present on K101. Glycyl lysine isopeptide (Lys-Gly) (interchain with G-Cter in SUMO2) cross-links involve residues K108 and K130. Positions 141-1007 (ISDSYVDGSS…SGSFHLCPGV (867 aa)) are disordered. Y145 carries the phosphotyrosine modification. K169 bears the N6-acetyllysine mark. Basic residues-rich tracts occupy residues 186–197 (KQKKKKKKKDRG) and 207–249 (RERK…KRSR). Residues 197 to 259 (GRRSESSSPR…STTPAPKSRR (63 aa)) are sufficient for RNA-binding. Phosphoserine occurs at positions 220 and 222. Over residues 263–284 (STSADSASSSDTSRSRSRSAAA) the composition is skewed to low complexity. Phosphoserine occurs at positions 295, 300, 310, 322, and 323. Residues 319 to 334 (QQPSSPAPSTKQSSSP) show a composition bias toward low complexity. Residues 335–345 (YEDKDKKEKSA) are compositionally biased toward basic and acidic residues. Phosphoserine occurs at positions 349, 351, 355, and 356. Phosphothreonine is present on residues T357 and T365. Phosphoserine is present on residues S375, S385, S393, S396, S402, S406, S422, S433, S434, S435, S438, S452, S482, S484, S503, S505, S507, S531, S533, and S540. Residues 383–396 (PSSQEPVNPSSEAS) are compositionally biased toward polar residues. Polar residues predominate over residues 425-437 (PTKGSRHASSSPE). A compositionally biased stretch (basic residues) spans 459-533 (NRSHGRAKRD…SPQRRGRSRS (75 aa)). Positions 534 to 543 (PQRPGWSRSR) are enriched in low complexity. 3 stretches are compositionally biased toward basic residues: residues 544–561 (NTQR…RSHS), 568–721 (GRSR…RRGR), and 730–740 (NKSRTSQRRSR). Residues S700, S702, and S704 each carry the phosphoserine modification. A phosphoserine mark is found at S773, S775, and S778. The segment covering 785-817 (SQTPTRRSRSGSSPPKQKSKTPPRQSRSNSPQP) has biased composition (low complexity). S821 and S829 each carry phosphoserine. Composition is skewed to polar residues over residues 829–851 (SVTN…SESS) and 859–874 (RTPS…PRVK). 2 positions are modified to phosphothreonine: T831 and T841. Residues S846, S850, and S851 each carry the phosphoserine modification. Composition is skewed to low complexity over residues 875-891 (SSTP…SPQP) and 898-919 (SPRG…TSRT). Phosphoserine is present on residues S882, S909, S924, S926, S928, S940, S942, S944, S945, S946, and S949. T955 carries the post-translational modification Phosphothreonine. Over residues 960–1000 (SGSTSPYLKSMLQTPPDQNLSGSKSPCPQKSRDSPTGSSGS) the composition is skewed to polar residues. Phosphoserine is present on residues S962 and S964. At Y966 the chain carries Phosphotyrosine. At T973 the chain carries Phosphothreonine. Phosphoserine occurs at positions 980, 984, and 993. T995 is subject to Phosphothreonine. A phosphoserine mark is found at S997, S1000, S1011, S1037, and S1038. Polar residues predominate over residues 1024–1057 (VQQKGHTQTWPDTSSPEVMQTQVESPLLQSKSQT). Residues 1024-1112 (VQQKGHTQTW…TKPDSSIYPL (89 aa)) form a disordered region. Phosphothreonine is present on T1044. Residues S1048, S1064, S1066, S1067, and S1068 each carry the phosphoserine modification. The segment covering 1058 to 1068 (SPKGSLSRSSS) has biased composition (low complexity). Phosphothreonine is present on T1071. Residues S1077, S1087, S1094, S1097, S1117, S1151, S1159, S1175, S1188, S1216, S1225, S1229, S1230, S1269, S1276, S1278, S1284, S1287, S1294, S1305, S1325, S1338, S1339, S1340, S1343, S1359, and S1360 each carry the phosphoserine modification. The segment covering 1079-1092 (VKQDKSEISTDPKL) has biased composition (basic and acidic residues). Positions 1136–2092 (IQEDVASSCI…RSPGMLEPLG (957 aa)) are disordered. The span at 1146 to 1158 (PRDKFSPTQDRPE) shows a compositional bias: basic and acidic residues. The span at 1270 to 1284 (PEHKELSHSPPRENS) shows a compositional bias: basic and acidic residues. Positions 1285–1304 (FESSLEFKNSGPVSEVNTGF) are enriched in polar residues. T1370 carries the phosphothreonine modification. A compositionally biased stretch (basic and acidic residues) spans 1371–1387 (PSRERSSSASPELKDGL). A phosphoserine mark is found at S1372, S1378, and S1380. T1390 carries the phosphothreonine modification. Low complexity predominate over residues 1397 to 1408 (SGSSPGLRDGSG). S1400 and S1407 each carry phosphoserine. Position 1409 is a phosphothreonine (T1409). A compositionally biased stretch (polar residues) spans 1409–1431 (TPSRHSLSGSSPGMKDTPQTPSR). Phosphoserine is present on residues S1414, S1416, S1418, and S1419. T1428 carries the post-translational modification Phosphothreonine. Phosphoserine is present on residues S1438 and S1439. T1448 carries the phosphothreonine modification. Phosphoserine occurs at positions 1453, 1455, 1457, 1458, and 1465. Residues 1454-1468 (HSPSSPERNNKSVTP) are compositionally biased toward polar residues. T1467 carries the phosphothreonine modification. Residues S1473, S1475, S1477, and S1478 each carry the phosphoserine modification. A compositionally biased stretch (polar residues) spans 1475 to 1489 (SESSVEQKNLARTSP). T1487 is subject to Phosphothreonine. Low complexity predominate over residues 1490–1499 (GQRSRSGSSQ). Phosphoserine is present on residues S1493, S1495, S1497, S1498, and S1508. Residues 1511–1523 (ERSESDSSPDSKP) show a composition bias toward basic and acidic residues. Over residues 1524–1533 (KTRTPLRQRS) the composition is skewed to basic residues. A phosphoserine mark is found at S1533, S1535, S1537, S1538, S1554, S1556, S1557, S1572, S1576, S1577, S1604, S1614, S1647, S1649, and S1650. Over residues 1604 to 1613 (SPEGSSSSES) the composition is skewed to low complexity. Basic residues predominate over residues 1637-1647 (KSHTPPRRRSS). T1654 is modified (phosphothreonine). A phosphoserine mark is found at S1683, S1685, S1687, S1688, S1718, and S1720. Basic residues-rich tracts occupy residues 1725 to 1745 (GLQR…RRRD) and 1754 to 1772 (SRRR…RRRG). 6 positions are modified to phosphoserine: S1774, S1778, S1810, S1813, S1832, and S1834. The span at 1776–1789 (YHSRSPTRQESSRT) shows a compositional bias: low complexity. The segment covering 1790–1810 (SSRRRRGRSRTPLTSRKRSRS) has biased composition (basic residues). Residues 1818–2020 (KRSRSRASPA…PRAARGKRSL (203 aa)) are compositionally biased toward basic residues. T1836 bears the Phosphothreonine mark. Phosphoserine is present on residues S1840 and S1846. At T1848 the chain carries Phosphothreonine. A phosphoserine mark is found at S1849, S1869, S1872, S1876, and S1878. T1880 and T1884 each carry phosphothreonine. S1898 and S1900 each carry phosphoserine. T1902 and T1906 each carry phosphothreonine. A phosphoserine mark is found at S1910 and S1912. 2 positions are modified to phosphothreonine: T1914 and T1918. A phosphoserine mark is found at S1922, S1924, and S1927. T1930 carries the phosphothreonine modification. S1936, S1939, S1948, S1951, S1960, S1963, S1970, and S1972 each carry phosphoserine. T1974 is modified (phosphothreonine). Phosphoserine is present on residues S1982 and S1984. A Phosphothreonine modification is found at T1986. Phosphoserine occurs at positions 1994, 1996, 1998, and 2019. At T2021 the chain carries Phosphothreonine. Low complexity predominate over residues 2022-2047 (RSPPAIRRRSASGSSSDRSRSATPPA). A phosphoserine mark is found at S2023 and S2042. T2044 carries the post-translational modification Phosphothreonine. A phosphoserine mark is found at S2052 and S2054. T2056 carries the phosphothreonine modification. Over residues 2062 to 2076 (SSSRMSCFSRPSMSP) the composition is skewed to low complexity. Residues S2070, S2073, S2075, and S2084 each carry the phosphoserine modification. At T2096 the chain carries Phosphothreonine. An omega-N-methylarginine mark is found at R2146, R2159, R2183, and R2198. S2224 bears the Phosphoserine mark. Omega-N-methylarginine is present on residues R2226 and R2240. Phosphothreonine is present on residues T2241 and T2254. S2262 is modified (phosphoserine). The segment at 2263 to 2703 (LTGSGTPPTA…SNRHRSSRSP (441 aa)) is disordered. A phosphothreonine mark is found at T2268 and T2281. Positions 2269–2283 (PPTAANYPSSSRTPQ) are enriched in polar residues. At R2295 the chain carries Omega-N-methylarginine. A phosphoserine mark is found at S2296, S2321, and S2329. Position 2334 is a phosphothreonine (T2334). S2335 bears the Phosphoserine mark. At R2337 the chain carries Asymmetric dimethylarginine; alternate. The residue at position 2337 (R2337) is an Omega-N-methylarginine; alternate. Phosphoserine is present on residues S2347, S2351, and S2360. T2362 is modified (phosphothreonine). 6 positions are modified to phosphoserine: S2365, S2368, S2381, S2384, S2404, and S2408. Composition is skewed to polar residues over residues 2410–2443 (FSDQ…SASD) and 2467–2476 (TGAQQPSTLA). Positions 2487–2521 (SSSSSSSSSSSSSSSSSSSSSSSSGSSSSDSEGSS) are enriched in low complexity. Residue S2535 is modified to Phosphoserine. A Phosphothreonine modification is found at T2537. A Glycyl lysine isopeptide (Lys-Gly) (interchain with G-Cter in SUMO2) cross-link involves residue K2541. Phosphothreonine is present on T2553. A compositionally biased stretch (low complexity) spans 2562–2602 (SSSSSSSSSSSSSSSSSSSSSSSSSSSSSSSSSSSSSSSSS). A compositionally biased stretch (pro residues) spans 2605–2622 (PAKPGPQALPKPASPKKP). Phosphoserine is present on residues S2618, S2629, S2631, S2638, S2642, S2644, S2646, S2648, S2656, and S2660. The segment covering 2623–2643 (PPGERRSRSPRKPIDSLRDSR) has biased composition (basic and acidic residues). T2689 is subject to Phosphothreonine. Phosphoserine is present on S2691. Positions 2694–2703 (SNRHRSSRSP) are enriched in basic residues.

The protein belongs to the CWC21 family. As to quaternary structure, component of pre-catalytic, catalytic and post-catalytic spliceosome complexes. Found in a pre-mRNA splicing complex with SFRS4, SFRS5, SNRP70, SNRPA1, SRRM1 and SRRM2. Component of the minor spliceosome, which splices U12-type introns. Interacts with DHX8. Interacts with CACTIN.

The protein resides in the nucleus. It is found in the nucleus speckle. In terms of biological role, required for pre-mRNA splicing as component of the spliceosome. As a component of the minor spliceosome, involved in the splicing of U12-type introns in pre-mRNAs. The sequence is that of Serine/arginine repetitive matrix protein 2 (Srrm2) from Mus musculus (Mouse).